The primary structure comprises 1009 residues: Protein-tyrosine kinase 2-beta (1009 aa).

The region spanning 39-359 (RILKVCFYSN…GYCRLQGEHK (321 aa)) is the FERM domain. 3 positions are modified to phosphoserine: serine 361, serine 375, and serine 399. Tyrosine 402 is modified (phosphotyrosine; by autocatalysis). Residues 425-683 (VVLNRILGEG…ELVCSLSDIY (259 aa)) enclose the Protein kinase domain. ATP is bound by residues 431–439 (LGEGFFGEV), lysine 457, and 503–509 (ELYPYGE). Residue aspartate 549 is the Proton acceptor of the active site. Tyrosine 579 bears the Phosphotyrosine mark. Tyrosine 580 is subject to Phosphotyrosine; by SRC, FYN and LCK. A disordered region spans residues 696 to 728 (NARYRPPKILEPTTFQEPPPKPSRPKYRPPPQT). Positions 712 to 727 (EPPPKPSRPKYRPPPQ) are enriched in pro residues. Tyrosine 722 bears the Phosphotyrosine mark. The residue at position 762 (serine 762) is a Phosphoserine. Residue threonine 765 is modified to Phosphothreonine. The tract at residues 801–1009 (KIKMKQVLER…VANLAHPPAE (209 aa)) is interaction with TGFB1I1. Residue tyrosine 834 is modified to Phosphotyrosine. A Phosphoserine modification is found at serine 839. A Phosphothreonine modification is found at threonine 842. Tyrosine 849 carries the phosphotyrosine modification. At serine 866 the chain carries Phosphoserine. Residues 868 to 1009 (QPTANLDRTD…VANLAHPPAE (142 aa)) are focal adhesion targeting (FAT). Tyrosine 881 carries the phosphotyrosine modification.

Belongs to the protein kinase superfamily. Tyr protein kinase family. FAK subfamily. As to quaternary structure, homodimer, or homooligomer. Interacts with KCNA2. Interacts with NPHP1, ASAP1, ASAP2, ARHGAP26, SKAP2 and TGFB1I1. The Tyr-402 phosphorylated form interacts with SRC (via SH2 domain) and SRC family members. Forms a signaling complex with EPHA1, LCK and phosphatidylinositol 3-kinase; upon activation by EFNA1. Interacts with GRB2 (via SH2 domain). Interacts with P53/TP53 and MDM2. Interacts with MYLK. Interacts with BCAR1. Interacts with RB1CC1. Interacts with RHOU. Interacts with VAV1. Interacts with PDPK1. Interacts with DLG4. Interacts with LPXN and PTPN12. Interacts with SIRPA and SH2D3C. Interacts (hypophosphorylated) with PXN. Interacts with ARHGAP10. In terms of processing, phosphorylated on tyrosine residues in response to various stimuli that elevate the intracellular calcium concentration; this activation is indirect and may be mediated by production of reactive oxygen species (ROS). Tyr-402 is the major autophosphorylation site, but other kinases can also phosphorylate Tyr-402. Autophosphorylation occurs in trans, i.e. one subunit of the dimeric receptor phosphorylates tyrosine residues on the other subunit. Phosphorylation at Tyr-402 promotes interaction with SRC and SRC family members, leading to phosphorylation at Tyr-579; Tyr-580 and Tyr-881. Phosphorylation at Tyr-881 is important for interaction with GRB2. Phosphorylated on tyrosine residues upon activation of FGR and PKC. Recruitment by NPHP1 to cell matrix adhesions initiates Tyr-402 phosphorylation. In monocytes, adherence to substrata is required for tyrosine phosphorylation and kinase activation. Angiotensin II, thapsigargin and L-alpha-lysophosphatidic acid (LPA) also induce autophosphorylation and increase kinase activity. Phosphorylation by MYLK promotes ITGB2 activation and is thus essential to trigger neutrophil transmigration during lung injury. Dephosphorylated by PTPN12.

Its subcellular location is the cytoplasm. It localises to the perinuclear region. The protein resides in the cell membrane. The protein localises to the cell junction. It is found in the focal adhesion. Its subcellular location is the cell projection. It localises to the lamellipodium. The protein resides in the cell cortex. The protein localises to the nucleus. The catalysed reaction is L-tyrosyl-[protein] + ATP = O-phospho-L-tyrosyl-[protein] + ADP + H(+). With respect to regulation, activated in response to stimuli that lead to increased intracellular Ca(2+) levels; this activation is indirect and may be mediated by calcium-mediated production of reactive oxygen species (ROS). Activated by autophosphorylation at Tyr-402; this creates a binding site for SRC family kinases and leads to phosphorylation at additional tyrosine residues. Phosphorylation at Tyr-402, Tyr-579 and Tyr-580 is required for optimal kinase activity. In terms of biological role, non-receptor protein-tyrosine kinase that regulates reorganization of the actin cytoskeleton, cell polarization, cell migration, adhesion, spreading and bone remodeling. Plays a role in the regulation of the humoral immune response, and is required for normal levels of marginal B-cells in the spleen and normal migration of splenic B-cells. Required for normal macrophage polarization and migration towards sites of inflammation. Regulates cytoskeleton rearrangement and cell spreading in T-cells, and contributes to the regulation of T-cell responses. Promotes osteoclastic bone resorption; this requires both PTK2B/PYK2 and SRC. May inhibit differentiation and activity of osteoprogenitor cells. Functions in signaling downstream of integrin and collagen receptors, immune receptors, G-protein coupled receptors (GPCR), cytokine, chemokine and growth factor receptors, and mediates responses to cellular stress. Forms multisubunit signaling complexes with SRC and SRC family members upon activation; this leads to the phosphorylation of additional tyrosine residues, creating binding sites for scaffold proteins, effectors and substrates. Regulates numerous signaling pathways. Promotes activation of phosphatidylinositol 3-kinase and of the AKT1 signaling cascade. Promotes activation of NOS3. Regulates production of the cellular messenger cGMP. Promotes activation of the MAP kinase signaling cascade, including activation of MAPK1/ERK2, MAPK3/ERK1 and MAPK8/JNK1. Promotes activation of Rho family GTPases, such as RHOA and RAC1. Recruits the ubiquitin ligase MDM2 to P53/TP53 in the nucleus, and thereby regulates P53/TP53 activity, P53/TP53 ubiquitination and proteasomal degradation. Acts as a scaffold, binding to both PDPK1 and SRC, thereby allowing SRC to phosphorylate PDPK1 at 'Tyr-9, 'Tyr-373', and 'Tyr-376'. Promotes phosphorylation of NMDA receptors by SRC family members, and thereby contributes to the regulation of NMDA receptor ion channel activity and intracellular Ca(2+) levels. May also regulate potassium ion transport by phosphorylation of potassium channel subunits. Phosphorylates SRC; this increases SRC kinase activity. Phosphorylates ASAP1, NPHP1, KCNA2 and SHC1. Promotes phosphorylation of ASAP2, RHOU and PXN; this requires both SRC and PTK2/PYK2. In Mus musculus (Mouse), this protein is Protein-tyrosine kinase 2-beta (Ptk2b).